The chain runs to 269 residues: Indole-3-glycerol phosphate synthase (269 aa).

This sequence belongs to the TrpC family.

The catalysed reaction is 1-(2-carboxyphenylamino)-1-deoxy-D-ribulose 5-phosphate + H(+) = (1S,2R)-1-C-(indol-3-yl)glycerol 3-phosphate + CO2 + H2O. Its pathway is amino-acid biosynthesis; L-tryptophan biosynthesis; L-tryptophan from chorismate: step 4/5. The chain is Indole-3-glycerol phosphate synthase from Saccharopolyspora erythraea (strain ATCC 11635 / DSM 40517 / JCM 4748 / NBRC 13426 / NCIMB 8594 / NRRL 2338).